The following is a 118-amino-acid chain: Large ribosomal subunit protein uL18 (118 aa).

This sequence belongs to the universal ribosomal protein uL18 family. Part of the 50S ribosomal subunit; part of the 5S rRNA/L5/L18/L25 subcomplex. Contacts the 5S and 23S rRNAs.

Functionally, this is one of the proteins that bind and probably mediate the attachment of the 5S RNA into the large ribosomal subunit, where it forms part of the central protuberance. This chain is Large ribosomal subunit protein uL18, found in Campylobacter hominis (strain ATCC BAA-381 / DSM 21671 / CCUG 45161 / LMG 19568 / NCTC 13146 / CH001A).